Consider the following 284-residue polypeptide: uncharacterized protein (284 aa).

Polar residues predominate over residues 1-27; that stretch reads MSNLPTSTPVSPSNLAEENPKSNNPES. Disordered regions lie at residues 1-29 and 248-284; these read MSNL…ESSE and TRDS…LKKK.

This is an uncharacterized protein from Caenorhabditis elegans.